An 83-amino-acid chain; its full sequence is Normal mucosa of esophagus-specific gene 1 protein (83 aa).

It belongs to the complex I NDUFA4 subunit family.

The protein resides in the nucleus. The polypeptide is Normal mucosa of esophagus-specific gene 1 protein (Nmes1) (Rattus norvegicus (Rat)).